We begin with the raw amino-acid sequence, 232 residues long: Urease accessory protein UreF (232 aa).

It belongs to the UreF family. As to quaternary structure, ureD, UreF and UreG form a complex that acts as a GTP-hydrolysis-dependent molecular chaperone, activating the urease apoprotein by helping to assemble the nickel containing metallocenter of UreC. The UreE protein probably delivers the nickel.

It is found in the cytoplasm. Functionally, required for maturation of urease via the functional incorporation of the urease nickel metallocenter. The protein is Urease accessory protein UreF of Azorhizobium caulinodans (strain ATCC 43989 / DSM 5975 / JCM 20966 / LMG 6465 / NBRC 14845 / NCIMB 13405 / ORS 571).